We begin with the raw amino-acid sequence, 284 residues long: Bifunctional protein FolD (284 aa).

NADP(+) is bound by residues 166–168 and Ile-232; that span reads GAS.

This sequence belongs to the tetrahydrofolate dehydrogenase/cyclohydrolase family. As to quaternary structure, homodimer.

The enzyme catalyses (6R)-5,10-methylene-5,6,7,8-tetrahydrofolate + NADP(+) = (6R)-5,10-methenyltetrahydrofolate + NADPH. It catalyses the reaction (6R)-5,10-methenyltetrahydrofolate + H2O = (6R)-10-formyltetrahydrofolate + H(+). Its pathway is one-carbon metabolism; tetrahydrofolate interconversion. In terms of biological role, catalyzes the oxidation of 5,10-methylenetetrahydrofolate to 5,10-methenyltetrahydrofolate and then the hydrolysis of 5,10-methenyltetrahydrofolate to 10-formyltetrahydrofolate. The protein is Bifunctional protein FolD of Shewanella baltica (strain OS223).